The primary structure comprises 547 residues: MNPSTAQARVVVDELVRGGVHDVVLCPGSRNAPLAFALADADRAGRLRLHVRIDERTAGFLAIGLAVADRAPVCVAMTSGTAVANLGPAVVEANYARVPLIVLSANRPYELLGTGANQTFEQLGYFGNQVRANISLGLAPELSAGSPGDMTSLNAQWRSATCRVVVAATGSRSANAGPVQFDIPLREPLVPTFDDDGSCPPGRPDGKPWTHTPPVTFDQPLDIDLTPDTVVIAGHGAGVHPNLADLPTVAEPTAPPAANPLHPMALRLLRPKQVIMLGRPTLHRPVSALLADPSVPVYALTTGPRWPDVSGNSQATGTRAVTSGTPDPAWLRRCKEVNDHAVAAVREQLAAHPLTTGLHVAAAVADAVRPGDQLVLGASNPVRDAALVGFTPHGVQVRSNRGVAGIDGTVSTAIGAALAHDRTGGRTIALMGDLTFVHDSSGLLIGPTEPTPRNLTIVVSNDNGGGIFELLEQGDPRFSDVSSRVFGTPHDVDVGALCRAYHVDNRQIEVGQLADALDEPHEGMRVLEVKADRSSLRALHASIKAAL.

This sequence belongs to the TPP enzyme family. MenD subfamily. Homodimer. Mg(2+) is required as a cofactor. It depends on Mn(2+) as a cofactor. The cofactor is thiamine diphosphate.

It catalyses the reaction isochorismate + 2-oxoglutarate + H(+) = 5-enolpyruvoyl-6-hydroxy-2-succinyl-cyclohex-3-ene-1-carboxylate + CO2. It functions in the pathway quinol/quinone metabolism; 1,4-dihydroxy-2-naphthoate biosynthesis; 1,4-dihydroxy-2-naphthoate from chorismate: step 2/7. It participates in quinol/quinone metabolism; menaquinone biosynthesis. In terms of biological role, catalyzes the thiamine diphosphate-dependent decarboxylation of 2-oxoglutarate and the subsequent addition of the resulting succinic semialdehyde-thiamine pyrophosphate anion to isochorismate to yield 2-succinyl-5-enolpyruvyl-6-hydroxy-3-cyclohexene-1-carboxylate (SEPHCHC). The chain is 2-succinyl-5-enolpyruvyl-6-hydroxy-3-cyclohexene-1-carboxylate synthase from Mycobacterium sp. (strain JLS).